A 349-amino-acid chain; its full sequence is Anthranilate phosphoribosyltransferase (349 aa).

5-phospho-alpha-D-ribose 1-diphosphate contacts are provided by residues glycine 82, 85-86, 92-95, 110-118, and serine 122; these read GD, NVST, and KHGNRAVSG. Glycine 82 contacts anthranilate. Serine 94 contacts Mg(2+). Asparagine 113 contributes to the anthranilate binding site. Arginine 168 serves as a coordination point for anthranilate. Residues aspartate 227 and glutamate 228 each contribute to the Mg(2+) site.

The protein belongs to the anthranilate phosphoribosyltransferase family. In terms of assembly, homodimer. Mg(2+) serves as cofactor.

The catalysed reaction is N-(5-phospho-beta-D-ribosyl)anthranilate + diphosphate = 5-phospho-alpha-D-ribose 1-diphosphate + anthranilate. It participates in amino-acid biosynthesis; L-tryptophan biosynthesis; L-tryptophan from chorismate: step 2/5. Catalyzes the transfer of the phosphoribosyl group of 5-phosphorylribose-1-pyrophosphate (PRPP) to anthranilate to yield N-(5'-phosphoribosyl)-anthranilate (PRA). The sequence is that of Anthranilate phosphoribosyltransferase from Pseudomonas savastanoi pv. phaseolicola (strain 1448A / Race 6) (Pseudomonas syringae pv. phaseolicola (strain 1448A / Race 6)).